Here is a 710-residue protein sequence, read N- to C-terminus: Dendrin (710 aa).

4 disordered regions span residues 1–22 (MLDG…DEES), 62–195 (WARG…PWGG), 213–274 (AGTA…KRLD), and 324–375 (GLNS…GKEG). A coiled-coil region spans residues 103 to 134 (AEVRAREQEKRKAASQEREAKETERKRRKAGG). The segment covering 105 to 127 (VRAREQEKRKAASQEREAKETER) has biased composition (basic and acidic residues). The interval 113–131 (RKAASQEREAKETERKRRK) is nuclear localization. The interaction with MAGI2 stretch occupies residues 186-236 (GVAWAGPWGGRRPGPPSYEAHLLLRGSAGTAPRRRWDRPPPYVAPPSYEGP). The span at 265 to 274 (EGGRTKKRLD) shows a compositional bias: basic and acidic residues. Residues 341-435 (PGTDAALSRS…LEVWKVTRRA (95 aa)) form an interaction with ACTN1 region. Over residues 360–370 (PRSRQHLRGSR) the composition is skewed to basic residues. Phosphoserine is present on serine 388. Disordered regions lie at residues 390 to 422 (KKPP…EGAE), 469 to 508 (PRTQ…ANPS), and 521 to 710 (NQPS…RERE). The segment at 407 to 708 (GGTGWKESLG…TRKTPQGNRE (302 aa)) is interaction with CD2AP and NPHS1. The span at 469-491 (PRTQQGQLVPSGESCSVSDSLSQ) shows a compositional bias: polar residues. Positions 693 to 710 (GFIREDTRKTPQGNRERE) are enriched in basic and acidic residues.

In terms of assembly, forms a ternary complex with MAGI2 and SH3KBP1; recruits DDN to the cytoplasm. Interacts with MAGI1. Interacts with ACTN1 and may interact with WWC1. Interacts with the podocyte slit diaphragm proteins CD2AP, NPHS1 and NPHS2; the interaction with CD2AP and NPHS1 is direct. As to expression, two forms of 81 kDa and 89 kDa are expressed in brain. The 81 kDa form is the only one found in kidney podocytes.

The protein resides in the cell projection. It is found in the dendritic spine membrane. Its subcellular location is the cytoplasm. The protein localises to the endoplasmic reticulum membrane. It localises to the perikaryon. The protein resides in the nucleus. In terms of biological role, promotes apoptosis of kidney glomerular podocytes. Podocytes are highly specialized cells essential to the ultrafiltration of blood, resulting in the extraction of urine and the retention of protein. The polypeptide is Dendrin (Ddn) (Mus musculus (Mouse)).